A 943-amino-acid chain; its full sequence is Tyrosine-protein kinase transmembrane receptor ROR2 (943 aa).

An N-terminal signal peptide occupies residues 1–33; it reads MARGSALPRRPLLCIPAVWAAAALLLSVSRTSG. Over 34–403 the chain is Extracellular; the sequence is EVEVLDPNDP…CSPRDSSKMG (370 aa). Residues 55 to 145 form the Ig-like C2-type domain; the sequence is PTLKGYFLNF…VATNGMKTIT (91 aa). N-linked (GlcNAc...) asparagine glycosylation occurs at Asn-70. Disulfide bonds link Cys-83-Cys-135, Cys-174-Cys-239, Cys-182-Cys-232, Cys-223-Cys-264, Cys-252-Cys-300, Cys-256-Cys-286, Cys-316-Cys-394, Cys-337-Cys-377, and Cys-365-Cys-389. Positions 169 to 303 constitute an FZ domain; it reads HEDGFCQPYR…SPDAANCMRI (135 aa). A glycan (N-linked (GlcNAc...) asparagine) is linked at Asn-188. A Kringle domain is found at 316-394; sequence CYNGSGMDYR…RMELCDVPSC (79 aa). An N-linked (GlcNAc...) asparagine glycan is attached at Asn-318. A helical transmembrane segment spans residues 404–424; the sequence is ILYILVPSIAIPLVIACLFFL. At 425-943 the chain is on the cytoplasmic side; the sequence is VCMCRNKQKA…VDEAQVQLEA (519 aa). Sulfoserine; partial is present on residues Ser-469 and Ser-471. The region spanning 473–746 is the Protein kinase domain; that stretch reads VRFMEELGED…PRFKDIHSRL (274 aa). ATP-binding positions include 479–487 and Lys-507; that span reads LGEDRFGKV. The active-site Proton acceptor is the Asp-615. Phosphotyrosine; by autocatalysis is present on Tyr-646. Disordered stretches follow at residues 757 to 796 and 850 to 931; these read SSAQ…APPF and QVPP…DCDT. Low complexity-rich tracts occupy residues 765–791 and 857–872; these read SNTT…GPKQ and PKPS…TSTG. Arg-785 is modified (asymmetric dimethylarginine). Over residues 873–883 the composition is skewed to polar residues; the sequence is YVTTAPSNTSM.

Belongs to the protein kinase superfamily. Tyr protein kinase family. ROR subfamily. Homodimer; promotes osteogenesis. Binds YWHAB. Interacts with WTIP. Interacts with ROR2. Mg(2+) is required as a cofactor.

The protein resides in the cell membrane. The catalysed reaction is L-tyrosyl-[protein] + ATP = O-phospho-L-tyrosyl-[protein] + ADP + H(+). Functionally, tyrosine-protein kinase receptor which may be involved in the early formation of the chondrocytes. It seems to be required for cartilage and growth plate development. Phosphorylates YWHAB, leading to induction of osteogenesis and bone formation. In contrast, has also been shown to have very little tyrosine kinase activity in vitro. May act as a receptor for wnt ligand WNT5A which may result in the inhibition of WNT3A-mediated signaling. The polypeptide is Tyrosine-protein kinase transmembrane receptor ROR2 (ROR2) (Homo sapiens (Human)).